Here is a 456-residue protein sequence, read N- to C-terminus: Decaprenyl-diphosphate synthase (456 aa).

3 residues coordinate isopentenyl diphosphate: lysine 183, arginine 186, and histidine 216. Mg(2+) contacts are provided by aspartate 223 and aspartate 227. Arginine 233 is an isopentenyl diphosphate binding site.

It belongs to the FPP/GGPP synthase family. Requires Mg(2+) as cofactor.

It localises to the mitochondrion. It catalyses the reaction 7 isopentenyl diphosphate + (2E,6E)-farnesyl diphosphate = all-trans-decaprenyl diphosphate + 7 diphosphate. It functions in the pathway cofactor biosynthesis; ubiquinone biosynthesis. Supplies decaprenyl diphosphate, the precursor for the side chain of the isoprenoid quinones ubiquinone-10. The polypeptide is Decaprenyl-diphosphate synthase (coq1) (Dictyostelium discoideum (Social amoeba)).